The primary structure comprises 293 residues: Protease HtpX (293 aa).

The next 2 membrane-spanning stretches (helical) occupy residues phenylalanine 2–leucine 22 and leucine 38–phenylalanine 58. Histidine 145 is a Zn(2+) binding site. Glutamate 146 is an active-site residue. Histidine 149 contacts Zn(2+). 2 helical membrane-spanning segments follow: residues valine 156–isoleucine 176 and isoleucine 193–isoleucine 213. Glutamate 222 serves as a coordination point for Zn(2+).

Belongs to the peptidase M48B family. The cofactor is Zn(2+).

The protein resides in the cell inner membrane. The chain is Protease HtpX from Hahella chejuensis (strain KCTC 2396).